The following is a 440-amino-acid chain: Serine hydroxymethyltransferase (440 aa).

Position 123–125 (123–125) interacts with (6S)-5,6,7,8-tetrahydrofolate; that stretch reads GHI. Lysine 238 is modified (N6-(pyridoxal phosphate)lysine).

This sequence belongs to the SHMT family. In terms of assembly, homodimer. It depends on pyridoxal 5'-phosphate as a cofactor.

It localises to the cytoplasm. It participates in amino-acid biosynthesis; glycine biosynthesis; glycine from L-serine: step 1/1. In terms of biological role, catalyzes the reversible interconversion of serine and glycine with a modified folate serving as the one-carbon carrier. Also exhibits a pteridine-independent aldolase activity toward beta-hydroxyamino acids, producing glycine and aldehydes, via a retro-aldol mechanism. The sequence is that of Serine hydroxymethyltransferase from Nitrosopumilus maritimus (strain SCM1).